A 218-amino-acid chain; its full sequence is MASFDQMRANVGKLLRGIDRYNPENLATLERYVETQAKENAYDLEANLAVLKLYQFNPAFFQTTVTAQILLKALTNLPHTDFTLCKCMIDQAHQEERPIRQILYLGDLLETCHFQSFWQALDENLDLIDGITGFEDSVRKFICHVVGITYQHIDRWLLAEMLGDLSEPQLRVWMSKYGWMESENGKIFVCNQEENIKPKNIVEKIDFDSVSGIMASSQ.

Positions 42 to 204 constitute a PCI domain; the sequence is YDLEANLAVL…NIKPKNIVEK (163 aa).

This sequence belongs to the eIF-3 subunit K family. In terms of assembly, component of the eukaryotic translation initiation factor 3 (eIF-3) complex, which is composed of 13 subunits: eif3a, eif3b, eif3c, eif3d, eif3e, eif3f, eif3g, eif3h, eif3i, eif3j, eif3k, eif3l and eif3m.

The protein localises to the nucleus. The protein resides in the cytoplasm. In terms of biological role, component of the eukaryotic translation initiation factor 3 (eIF-3) complex, which is involved in protein synthesis of a specialized repertoire of mRNAs and, together with other initiation factors, stimulates binding of mRNA and methionyl-tRNAi to the 40S ribosome. The eIF-3 complex specifically targets and initiates translation of a subset of mRNAs involved in cell proliferation. This Xenopus tropicalis (Western clawed frog) protein is Eukaryotic translation initiation factor 3 subunit K (eif3k).